The chain runs to 532 residues: Cocaine esterase (532 aa).

A Pyrrolidone carboxylic acid modification is found at glutamine 1. A disulfide bond links cysteine 69 and cysteine 96. The active-site Acyl-ester intermediate is the serine 201. A glycan (N-linked (GlcNAc...) asparagine) is linked at asparagine 249. An intrachain disulfide couples cysteine 253 to cysteine 264. Catalysis depends on charge relay system residues glutamate 318 and histidine 430. The Prevents secretion from ER signature appears at 529–532 (HTEL).

The protein belongs to the type-B carboxylesterase/lipase family. As to quaternary structure, monomer.

Its subcellular location is the endoplasmic reticulum lumen. The catalysed reaction is a carboxylic ester + H2O = an alcohol + a carboxylate + H(+). It catalyses the reaction cocaine + H2O = ecgonine methyl ester + benzoate + H(+). The enzyme catalyses 2-(5Z,8Z,11Z,14Z-eicosatetraenoyl)-glycerol + H2O = glycerol + (5Z,8Z,11Z,14Z)-eicosatetraenoate + H(+). It carries out the reaction prostaglandin E2 1-glyceryl ester + H2O = prostaglandin E2 + glycerol + H(+). The catalysed reaction is prostaglandin F2alpha 1-glyceryl ester + H2O = prostaglandin F2alpha + glycerol + H(+). In terms of biological role, involved in the detoxification of xenobiotics and in the activation of ester and amide prodrugs. Converts monoacylglycerides to free fatty acids and glycerol. Hydrolyzes of 2-arachidonoylglycerol and prostaglandins. In Oryctolagus cuniculus (Rabbit), this protein is Cocaine esterase (CES2).